Consider the following 323-residue polypeptide: Aspartate carbamoyltransferase catalytic subunit (323 aa).

Carbamoyl phosphate is bound by residues Arg55 and Thr56. Lys83 contacts L-aspartate. Carbamoyl phosphate contacts are provided by Arg105, His133, and Gln136. Residues Arg166 and Arg220 each coordinate L-aspartate. Residues Gly261 and Pro262 each coordinate carbamoyl phosphate.

Belongs to the aspartate/ornithine carbamoyltransferase superfamily. ATCase family. Heterododecamer (2C3:3R2) of six catalytic PyrB chains organized as two trimers (C3), and six regulatory PyrI chains organized as three dimers (R2).

It catalyses the reaction carbamoyl phosphate + L-aspartate = N-carbamoyl-L-aspartate + phosphate + H(+). It participates in pyrimidine metabolism; UMP biosynthesis via de novo pathway; (S)-dihydroorotate from bicarbonate: step 2/3. Catalyzes the condensation of carbamoyl phosphate and aspartate to form carbamoyl aspartate and inorganic phosphate, the committed step in the de novo pyrimidine nucleotide biosynthesis pathway. The chain is Aspartate carbamoyltransferase catalytic subunit from Acidothermus cellulolyticus (strain ATCC 43068 / DSM 8971 / 11B).